A 361-amino-acid chain; its full sequence is 3-dehydroquinate synthase (361 aa).

Residues N41, 70 to 75, 104 to 108, 128 to 129, K141, K150, 150 to 151, and 168 to 171 contribute to the NAD(+) site; these read DGEQYK, GVIGD, TT, KN, and CLTT. Zn(2+) is bound by residues E183, H246, and H263.

Belongs to the sugar phosphate cyclases superfamily. Dehydroquinate synthase family. The cofactor is NAD(+). Requires Co(2+) as cofactor. Zn(2+) serves as cofactor.

It is found in the cytoplasm. It carries out the reaction 7-phospho-2-dehydro-3-deoxy-D-arabino-heptonate = 3-dehydroquinate + phosphate. Its pathway is metabolic intermediate biosynthesis; chorismate biosynthesis; chorismate from D-erythrose 4-phosphate and phosphoenolpyruvate: step 2/7. Catalyzes the conversion of 3-deoxy-D-arabino-heptulosonate 7-phosphate (DAHP) to dehydroquinate (DHQ). The protein is 3-dehydroquinate synthase of Vibrio cholerae serotype O1 (strain ATCC 39315 / El Tor Inaba N16961).